A 368-amino-acid chain; its full sequence is 4-hydroxy-3-methylbut-2-en-1-yl diphosphate synthase (flavodoxin) (368 aa).

The [4Fe-4S] cluster site is built by C271, C274, C306, and E313.

This sequence belongs to the IspG family. [4Fe-4S] cluster serves as cofactor.

It carries out the reaction (2E)-4-hydroxy-3-methylbut-2-enyl diphosphate + oxidized [flavodoxin] + H2O + 2 H(+) = 2-C-methyl-D-erythritol 2,4-cyclic diphosphate + reduced [flavodoxin]. Its pathway is isoprenoid biosynthesis; isopentenyl diphosphate biosynthesis via DXP pathway; isopentenyl diphosphate from 1-deoxy-D-xylulose 5-phosphate: step 5/6. Its function is as follows. Converts 2C-methyl-D-erythritol 2,4-cyclodiphosphate (ME-2,4cPP) into 1-hydroxy-2-methyl-2-(E)-butenyl 4-diphosphate. This chain is 4-hydroxy-3-methylbut-2-en-1-yl diphosphate synthase (flavodoxin), found in Haemophilus influenzae (strain PittGG).